The primary structure comprises 291 residues: Kidney mitochondrial carrier protein 1 (291 aa).

Solcar repeat units lie at residues 7 to 96, 104 to 189, and 198 to 289; these read KPFI…LKRL, ETLV…TKKH, and DTVY…LKKL. The next 6 membrane-spanning stretches (helical) occupy residues 9–26, 71–89, 106–124, 164–183, 204–224, and 264–283; these read FIYGGLASITAECGTFPI, GIAPAMLRQASYGTIKIGT, LVLNAFCGVLSGVVSSCIA, GVSLTAQRAAIVVGVELPVY, FLSSFTCGLAGALASNPVDVV, and GFWPNWLRLGPWNIIFFITY.

This sequence belongs to the mitochondrial carrier (TC 2.A.29) family.

The protein localises to the mitochondrion inner membrane. The enzyme catalyses sulfite(in) + sulfate(out) = sulfite(out) + sulfate(in). It catalyses the reaction thiosulfate(in) + sulfate(out) = thiosulfate(out) + sulfate(in). The catalysed reaction is sulfate(out) + phosphate(in) = sulfate(in) + phosphate(out). It carries out the reaction oxalate(in) + sulfate(out) = oxalate(out) + sulfate(in). The enzyme catalyses malonate(in) + sulfate(out) = malonate(out) + sulfate(in). It catalyses the reaction maleate(in) + sulfate(out) = maleate(out) + sulfate(in). The catalysed reaction is (S)-malate(in) + sulfate(out) = (S)-malate(out) + sulfate(in). It carries out the reaction (3S)-citramalate(in) + sulfate(out) = (3S)-citramalate(out) + sulfate(in). The enzyme catalyses (3R)-citramalate(in) + sulfate(out) = (3R)-citramalate(out) + sulfate(in). It catalyses the reaction sulfate(out) + succinate(in) = sulfate(in) + succinate(out). The catalysed reaction is (S,S)-tartrate(in) + sulfate(out) = (S,S)-tartrate(out) + sulfate(in). It carries out the reaction (2R,3R)-tartrate(in) + sulfate(out) = (2R,3R)-tartrate(out) + sulfate(in). The enzyme catalyses D-aspartate(in) + sulfate(out) = D-aspartate(out) + sulfate(in). It catalyses the reaction L-aspartate(in) + sulfate(out) = L-aspartate(out) + sulfate(in). The catalysed reaction is sulfate(in) = sulfate(out). It carries out the reaction phosphate(in) = phosphate(out). The enzyme catalyses (S)-malate(out) = (S)-malate(in). Its function is as follows. Probable transporter. Functionally, antiporter that transports inorganic anions (sulfate, sulfite, thiosulfate and phosphate) and, to a lesser extent, a variety of dicarboxylates (e.g. malonate, malate and citramalate) and, even more so, aspartate. The sulfate/sulfate exchange is much higher than the phosphate/phosphate and malate/malate exchanges. The transport affinities is higher for sulfate and thiosulfate than for any other substrate. May catalyze the export of sulfite and thiosulfate (the hydrogen sulfide degradation products) from the mitochondria, thereby modulating the level of the hydrogen sulfide. Also may mediate a very low unidirectional transport of sulfate, phosphate and (S)-malate. The polypeptide is Kidney mitochondrial carrier protein 1 (Xenopus laevis (African clawed frog)).